We begin with the raw amino-acid sequence, 628 residues long: tRNA uridine 5-carboxymethylaminomethyl modification enzyme MnmG (628 aa).

Residue glycine 14 to glycine 19 coordinates FAD. Glycine 273 to phenylalanine 287 lines the NAD(+) pocket.

The protein belongs to the MnmG family. In terms of assembly, homodimer. Heterotetramer of two MnmE and two MnmG subunits. The cofactor is FAD.

It is found in the cytoplasm. In terms of biological role, NAD-binding protein involved in the addition of a carboxymethylaminomethyl (cmnm) group at the wobble position (U34) of certain tRNAs, forming tRNA-cmnm(5)s(2)U34. In Bacillus velezensis (strain DSM 23117 / BGSC 10A6 / LMG 26770 / FZB42) (Bacillus amyloliquefaciens subsp. plantarum), this protein is tRNA uridine 5-carboxymethylaminomethyl modification enzyme MnmG.